The chain runs to 61 residues: Sperm protamine P1 (61 aa).

Residues 1 to 61 form a disordered region; the sequence is MARYRRRSRS…RRYSRRGRRR (61 aa).

This sequence belongs to the protamine P1 family. Testis.

It localises to the nucleus. The protein localises to the chromosome. Functionally, protamines substitute for histones in the chromatin of sperm during the haploid phase of spermatogenesis. They compact sperm DNA into a highly condensed, stable and inactive complex. The sequence is that of Sperm protamine P1 (PRM1) from Dasyurus hallucatus (Northern quoll).